The following is a 443-amino-acid chain: ATP-dependent protease ATPase subunit HslU (443 aa).

ATP is bound by residues isoleucine 20, 62 to 67 (GVGKTE), aspartate 255, glutamate 321, and arginine 393.

Belongs to the ClpX chaperone family. HslU subfamily. As to quaternary structure, a double ring-shaped homohexamer of HslV is capped on each side by a ring-shaped HslU homohexamer. The assembly of the HslU/HslV complex is dependent on binding of ATP.

It localises to the cytoplasm. Its function is as follows. ATPase subunit of a proteasome-like degradation complex; this subunit has chaperone activity. The binding of ATP and its subsequent hydrolysis by HslU are essential for unfolding of protein substrates subsequently hydrolyzed by HslV. HslU recognizes the N-terminal part of its protein substrates and unfolds these before they are guided to HslV for hydrolysis. The chain is ATP-dependent protease ATPase subunit HslU from Helicobacter pylori (strain HPAG1).